A 155-amino-acid polypeptide reads, in one-letter code: uncharacterized protein (155 aa).

It belongs to the mimivirus L6/L7/L57 family.

This is an uncharacterized protein from Acanthamoeba polyphaga (Amoeba).